Consider the following 243-residue polypeptide: Small ribosomal subunit protein uS3 (243 aa).

The KH type-2 domain occupies 39–110 (IRVFIQKKYG…QVRINVVEIE (72 aa)). Residues 216-243 (QPLPVGASPRRKGNRRPQQFEDRSNDGK) are disordered. The segment covering 233-243 (QQFEDRSNDGK) has biased composition (basic and acidic residues).

The protein belongs to the universal ribosomal protein uS3 family. As to quaternary structure, part of the 30S ribosomal subunit. Forms a tight complex with proteins S10 and S14.

Its function is as follows. Binds the lower part of the 30S subunit head. Binds mRNA in the 70S ribosome, positioning it for translation. The polypeptide is Small ribosomal subunit protein uS3 (Prochlorococcus marinus (strain SARG / CCMP1375 / SS120)).